The sequence spans 260 residues: Snake venom serine protease KN5 (260 aa).

A signal peptide spans 1–18 (MVLIRVLANLLILQLSYA). Residues 19-24 (QKSSEL) constitute a propeptide that is removed on maturation. One can recognise a Peptidase S1 domain in the interval 25–251 (VIGGDECNIN…HLDWIQSIIA (227 aa)). Intrachain disulfides connect C31/C165, C100/C258, C144/C212, C176/C191, and C202/C227. The Charge relay system role is filled by H67. The N-linked (GlcNAc...) asparagine glycan is linked to N105. D112 serves as the catalytic Charge relay system. Residues N124 and N172 are each glycosylated (N-linked (GlcNAc...) asparagine). S206 functions as the Charge relay system in the catalytic mechanism. N213 and N255 each carry an N-linked (GlcNAc...) asparagine glycan.

The protein belongs to the peptidase S1 family. Snake venom subfamily. Monomer. As to expression, expressed by the venom gland.

It is found in the secreted. Its function is as follows. Snake venom serine protease that may act in the hemostasis system of the prey. This Trimeresurus stejnegeri (Chinese green tree viper) protein is Snake venom serine protease KN5.